A 447-amino-acid polypeptide reads, in one-letter code: N-succinylarginine dihydrolase (447 aa).

Substrate contacts are provided by residues alanine 19 to serine 28, asparagine 110, and histidine 137 to arginine 138. The active site involves glutamate 174. Substrate is bound at residue arginine 212. Histidine 248 is a catalytic residue. Residues aspartate 250 and asparagine 359 each contribute to the substrate site. Cysteine 365 serves as the catalytic Nucleophile.

Belongs to the succinylarginine dihydrolase family. In terms of assembly, homodimer.

The catalysed reaction is N(2)-succinyl-L-arginine + 2 H2O + 2 H(+) = N(2)-succinyl-L-ornithine + 2 NH4(+) + CO2. Its pathway is amino-acid degradation; L-arginine degradation via AST pathway; L-glutamate and succinate from L-arginine: step 2/5. Its function is as follows. Catalyzes the hydrolysis of N(2)-succinylarginine into N(2)-succinylornithine, ammonia and CO(2). This Shigella boydii serotype 4 (strain Sb227) protein is N-succinylarginine dihydrolase.